The primary structure comprises 553 residues: Effector protein HopAB2 (553 aa).

3 disordered regions span residues 1-123 (MAGI…APRR), 198-227 (AVHQ…GSSQ), and 239-275 (APNQ…AAMR). Residues 1–308 (MAGINRAGPS…LRTALERHVM (308 aa)) form a host recognition; Pto interaction region. Over residues 24 to 39 (SGQAHGSGSGASSSNS) the composition is skewed to low complexity. Over residues 47 to 60 (SNTPPSNAPAPPPT) the composition is skewed to pro residues. Low complexity predominate over residues 217 to 227 (SPAASSSGSSQ). Residues 242 to 255 (QGRSSNTAASQTPV) show a composition bias toward polar residues. The E3 ubiquitin-protein ligase stretch occupies residues 309 to 553 (QRLPIPLDIG…IAKYAFRIVP (245 aa)). The short motif at 325 to 328 (GINP) is the Interaction with Pto-kinase element. Positions 361-380 (APRPAVPVAPATASRRPDGT) are disordered. Residues 512–529 (KDLAFMDMKKLAQFLAGK) form a required for E3 ubiquitin-protein ligase and anti-PCD activities and pathogenesis region.

It belongs to the HopAB family. In terms of assembly, interacts physically with plant cell Pto. In terms of processing, auto-ubiquitinated.

It is found in the secreted. Effector protein involved in gene-for-gene resistance in tomato plants. It is recognized by the host Pto resistance protein and elicits Pto and Prf-dependent hypersensitive response (HR) and programmed cell death (PCD), resulting in host immunity. In susceptible plants, acts as a virulence factor by suppressing PCD and HR-based plant immunity. This function requires its E3 ubiquitin ligase activity probably by recruiting E2 enzymes and transferring ubiquitin molecules to cellular proteins involved in regulation of PCD and targeting them for degradation. Also, induces expression of host genes involved in ethylene biosynthesis and signaling, in particular ACO1 and ACO2, encoding the ethylene-forming enzyme ACC oxidase. The polypeptide is Effector protein HopAB2 (hopAB2) (Pseudomonas syringae pv. tomato (strain ATCC BAA-871 / DC3000)).